Consider the following 462-residue polypeptide: Toxin CfTX-2 (462 aa).

The N-terminal stretch at 1 to 17 (MILVSLLPLLFMTGIAS) is a signal peptide.

The protein belongs to the jellyfish toxin family. Type I subfamily. Oligomer. In terms of processing, contains disulfide bonds. In terms of tissue distribution, nematocytes.

It localises to the secreted. The protein resides in the nematocyst. The protein localises to the target cell membrane. Its function is as follows. May cause profound effects on the cardiovascular system of anesthetized rats (at 25 ug/kg), since the fraction containing this toxin and CfTX-1 produces an initial increase in mean arterial pressure, followed by cardiovascular collapse in all animals within 1 minute of injection. To note, the same fraction does not induce significant change in heart rate. Has weak hemolytic activity. Is lethal to crayfish. Causes cutaneous inflammation in humans. May act as a pore-forming toxin, disrupting normal transmembrane ion concentration gradients in susceptible cells. The sequence is that of Toxin CfTX-2 from Chironex fleckeri (Australian box jellyfish).